Here is a 327-residue protein sequence, read N- to C-terminus: Annexin A8 (327 aa).

Annexin repeat units lie at residues 21–92, 93–164, 177–249, and 253–324; these read FNPD…ALMY, PPYS…CLLQ, GLVL…TVVK, and NVHS…NLVG. Ca(2+)-binding residues include Met-266, Gly-268, Gly-270, and Asp-310.

This sequence belongs to the annexin family.

This protein is an anticoagulant protein that acts as an indirect inhibitor of the thromboplastin-specific complex, which is involved in the blood coagulation cascade. In Mus musculus (Mouse), this protein is Annexin A8 (Anxa8).